The primary structure comprises 427 residues: L-cysteine:1D-myo-inositol 2-amino-2-deoxy-alpha-D-glucopyranoside ligase (427 aa).

A Zn(2+)-binding site is contributed by cysteine 46. L-cysteinyl-5'-AMP contacts are provided by residues 46–49 (CGIT), threonine 61, and 84–86 (NVT). Positions 48 to 58 (ITPYDATHMGH) match the 'HIGH' region motif. The 'ERGGDP' region signature appears at 186 to 191 (ERGGDP). Residue tryptophan 233 participates in L-cysteinyl-5'-AMP binding. Zn(2+) is bound at residue cysteine 237. 255–257 (GSD) serves as a coordination point for L-cysteinyl-5'-AMP. Histidine 262 is a binding site for Zn(2+). Valine 289 is an L-cysteinyl-5'-AMP binding site. The short motif at 295–299 (KMSKS) is the 'KMSKS' region element.

This sequence belongs to the class-I aminoacyl-tRNA synthetase family. MshC subfamily. As to quaternary structure, monomer. It depends on Zn(2+) as a cofactor.

The enzyme catalyses 1D-myo-inositol 2-amino-2-deoxy-alpha-D-glucopyranoside + L-cysteine + ATP = 1D-myo-inositol 2-(L-cysteinylamino)-2-deoxy-alpha-D-glucopyranoside + AMP + diphosphate + H(+). In terms of biological role, catalyzes the ATP-dependent condensation of GlcN-Ins and L-cysteine to form L-Cys-GlcN-Ins. The protein is L-cysteine:1D-myo-inositol 2-amino-2-deoxy-alpha-D-glucopyranoside ligase of Catenulispora acidiphila (strain DSM 44928 / JCM 14897 / NBRC 102108 / NRRL B-24433 / ID139908).